An 81-amino-acid chain; its full sequence is UPF0729 protein C18orf32 homolog (81 aa).

The segment covering Ala-45 to Thr-58 has biased composition (polar residues). The interval Ala-45–Asp-81 is disordered.

Belongs to the UPF0729 family.

In Anoplopoma fimbria (Sablefish), this protein is UPF0729 protein C18orf32 homolog.